The sequence spans 120 residues: Large ribosomal subunit protein uL18 (120 aa).

It belongs to the universal ribosomal protein uL18 family. Part of the 50S ribosomal subunit; part of the 5S rRNA/L5/L18/L25 subcomplex. Contacts the 5S and 23S rRNAs.

This is one of the proteins that bind and probably mediate the attachment of the 5S RNA into the large ribosomal subunit, where it forms part of the central protuberance. This chain is Large ribosomal subunit protein uL18, found in Acidiphilium cryptum (strain JF-5).